The following is a 180-amino-acid chain: Oligoribonuclease (180 aa).

Positions 7–170 constitute an Exonuclease domain; that stretch reads LIWIDLEMTG…SDIQDSIDEL (164 aa). Y128 is a catalytic residue.

This sequence belongs to the oligoribonuclease family.

The protein localises to the cytoplasm. Functionally, 3'-to-5' exoribonuclease specific for small oligoribonucleotides. The protein is Oligoribonuclease of Ruthia magnifica subsp. Calyptogena magnifica.